A 95-amino-acid chain; its full sequence is uncharacterized protein (95 aa).

Low complexity predominate over residues 1-12; sequence MQNFMNNLSGGS. A disordered region spans residues 1-27; that stretch reads MQNFMNNLSGGSNKEGGEKSNDFLSSA.

This is an uncharacterized protein from Schizosaccharomyces pombe (strain 972 / ATCC 24843) (Fission yeast).